A 172-amino-acid polypeptide reads, in one-letter code: Ribosome maturation factor RimP (172 aa).

The protein belongs to the RimP family.

The protein resides in the cytoplasm. Its function is as follows. Required for maturation of 30S ribosomal subunits. The chain is Ribosome maturation factor RimP from Chlorobium phaeovibrioides (strain DSM 265 / 1930) (Prosthecochloris vibrioformis (strain DSM 265)).